The sequence spans 506 residues: Histone deacetylase complex subunit CTI6 (506 aa).

The disordered stretch occupies residues 49-71 (EESVKQEDVPMEGGEGEVEEEEG). Residues 62 to 71 (GEGEVEEEEG) show a composition bias toward acidic residues. Residues 72-123 (ETRCICGELDTPDDSGFFIQCEQCSSWQHGYCVSITQDNAPDKYWCEQCRPE) form a PHD-type zinc finger. Positions 138–425 (IYKPVQEKRR…KPRLPPQRTS (288 aa)) are disordered. Residue Thr174 is modified to Phosphothreonine. Ser175 bears the Phosphoserine mark. Thr177 is modified (phosphothreonine). The segment covering 179–195 (DNVDDIGDEEDEVEDEA) has biased composition (acidic residues). Phosphoserine occurs at positions 216 and 267. Basic and acidic residues-rich tracts occupy residues 231-271 (DSDK…HQED) and 312-342 (DDMK…EKES). Positions 373–393 (ASSRGSKRVSKPARKGNRTRR) are enriched in basic residues. The span at 394–404 (SNTSSDTNQNR) shows a compositional bias: polar residues. Residues 405 to 415 (RSADIGTDKPV) are compositionally biased toward basic and acidic residues.

As to quaternary structure, component of the RPD3C(L) complex composed of at least ASH1, CTI6, DEP1, PHO23, RPD3, RXT2, RXT3, SAP30, SDS3, SIN3, UME1 and UME6. Interacts with CYC8.

It localises to the nucleus. Functionally, component of the RPD3C(L) histone deacetylase complex (HDAC). Responsible for the deacetylation of lysine residues on the N-terminal part of the core histones (H2A, H2B, H3 and H4). Histone deacetylation gives a tag for epigenetic repression and plays an important role in transcriptional regulation, cell cycle progression and developmental events. CTI6 links the SAGA coactivator to the CYC8-TUP1 corepressor. Involved in transcription regulation of heme-regulated genes and required for GCN5 recruitment, histone H3 acetylation and SPT15/TBP binding to promoters. The chain is Histone deacetylase complex subunit CTI6 (CTI6) from Saccharomyces cerevisiae (strain ATCC 204508 / S288c) (Baker's yeast).